We begin with the raw amino-acid sequence, 267 residues long: Tryptophan synthase alpha chain (267 aa).

Catalysis depends on proton acceptor residues Glu47 and Asp58.

It belongs to the TrpA family. As to quaternary structure, tetramer of two alpha and two beta chains.

It carries out the reaction (1S,2R)-1-C-(indol-3-yl)glycerol 3-phosphate + L-serine = D-glyceraldehyde 3-phosphate + L-tryptophan + H2O. Its pathway is amino-acid biosynthesis; L-tryptophan biosynthesis; L-tryptophan from chorismate: step 5/5. Functionally, the alpha subunit is responsible for the aldol cleavage of indoleglycerol phosphate to indole and glyceraldehyde 3-phosphate. The polypeptide is Tryptophan synthase alpha chain (Chlorobaculum tepidum (strain ATCC 49652 / DSM 12025 / NBRC 103806 / TLS) (Chlorobium tepidum)).